Here is a 180-residue protein sequence, read N- to C-terminus: Endoribonuclease YbeY (180 aa).

The Zn(2+) site is built by His136, His140, and His146.

This sequence belongs to the endoribonuclease YbeY family. The cofactor is Zn(2+).

Its subcellular location is the cytoplasm. Its function is as follows. Single strand-specific metallo-endoribonuclease involved in late-stage 70S ribosome quality control and in maturation of the 3' terminus of the 16S rRNA. In Synechococcus sp. (strain CC9902), this protein is Endoribonuclease YbeY.